A 242-amino-acid polypeptide reads, in one-letter code: Ribonuclease PH (242 aa).

Residues arginine 87 and 125–127 (GTR) contribute to the phosphate site.

This sequence belongs to the RNase PH family. In terms of assembly, homohexameric ring arranged as a trimer of dimers.

It catalyses the reaction tRNA(n+1) + phosphate = tRNA(n) + a ribonucleoside 5'-diphosphate. Phosphorolytic 3'-5' exoribonuclease that plays an important role in tRNA 3'-end maturation. Removes nucleotide residues following the 3'-CCA terminus of tRNAs; can also add nucleotides to the ends of RNA molecules by using nucleoside diphosphates as substrates, but this may not be physiologically important. Probably plays a role in initiation of 16S rRNA degradation (leading to ribosome degradation) during starvation. This is Ribonuclease PH from Thermosynechococcus vestitus (strain NIES-2133 / IAM M-273 / BP-1).